We begin with the raw amino-acid sequence, 134 residues long: ATP synthase epsilon chain, chloroplastic (134 aa).

Belongs to the ATPase epsilon chain family. As to quaternary structure, F-type ATPases have 2 components, CF(1) - the catalytic core - and CF(0) - the membrane proton channel. CF(1) has five subunits: alpha(3), beta(3), gamma(1), delta(1), epsilon(1). CF(0) has three main subunits: a, b and c.

The protein resides in the plastid. It is found in the chloroplast thylakoid membrane. In terms of biological role, produces ATP from ADP in the presence of a proton gradient across the membrane. The protein is ATP synthase epsilon chain, chloroplastic of Gracilaria tenuistipitata var. liui (Red alga).